Here is a 260-residue protein sequence, read N- to C-terminus: Flavin-dependent thymidylate synthase (260 aa).

The 202-residue stretch at 2–203 (ISVKLVSYTN…PRLFKYTGPN (202 aa)) folds into the ThyX domain. Residues Ser-56, 80-82 (RHR), and Gln-88 contribute to the FAD site. DUMP contacts are provided by residues 77-80 (QLVR), 88-92 (QMSHR), and Arg-142. Residues 80–90 (RHRIASYTQMS) carry the ThyX motif motif. Residues 158 to 160 (NAR) and Asn-164 each bind FAD. Position 169 (Arg-169) interacts with dUMP. The active-site Involved in ionization of N3 of dUMP, leading to its activation is Arg-169.

It belongs to the thymidylate synthase ThyX family. Homotetramer. Requires FAD as cofactor.

It carries out the reaction dUMP + (6R)-5,10-methylene-5,6,7,8-tetrahydrofolate + NADPH + H(+) = dTMP + (6S)-5,6,7,8-tetrahydrofolate + NADP(+). It participates in pyrimidine metabolism; dTTP biosynthesis. Catalyzes the reductive methylation of 2'-deoxyuridine-5'-monophosphate (dUMP) to 2'-deoxythymidine-5'-monophosphate (dTMP) while utilizing 5,10-methylenetetrahydrofolate (mTHF) as the methyl donor, and NADPH and FADH(2) as the reductant. The chain is Flavin-dependent thymidylate synthase from Saccharolobus solfataricus (strain ATCC 35092 / DSM 1617 / JCM 11322 / P2) (Sulfolobus solfataricus).